Consider the following 917-residue polypeptide: Nitrate reductase [NADH] 1 (917 aa).

The disordered stretch occupies residues 62–81; the sequence is DSYDDSSSDDEDESHNRNVP. Residues 63 to 74 show a composition bias toward acidic residues; that stretch reads SYDDSSSDDEDE. Cys-197 lines the Mo-molybdopterin pocket. The Cytochrome b5 heme-binding domain maps to 545–620; it reads SKMYSISEVR…LEDYRIGELI (76 aa). His-580 and His-603 together coordinate heme. The 113-residue stretch at 660 to 772 folds into the FAD-binding FR-type domain; sequence REKIPVRLIE…KGPLGHIEYK (113 aa). FAD contacts are provided by residues 712 to 715, 729 to 733, Phe-734, Phe-741, 746 to 748, and Thr-799; these read RAYT, VVKVY, and LMS.

It belongs to the nitrate reductase family. Homodimer. FAD serves as cofactor. It depends on heme as a cofactor. Requires Mo-molybdopterin as cofactor. Root, leaf, and shoot.

It catalyses the reaction nitrite + NAD(+) + H2O = nitrate + NADH + H(+). Nitrate reductase is a key enzyme involved in the first step of nitrate assimilation in plants, fungi and bacteria. This is Nitrate reductase [NADH] 1 (NIA1) from Arabidopsis thaliana (Mouse-ear cress).